We begin with the raw amino-acid sequence, 190 residues long: Somatotropin (190 aa).

His-19 lines the Zn(2+) pocket. Cysteines 52 and 163 form a disulfide. Glu-172 provides a ligand contact to Zn(2+). An intrachain disulfide couples Cys-180 to Cys-188.

The protein belongs to the somatotropin/prolactin family.

The protein localises to the secreted. In terms of biological role, growth hormone plays an important role in growth control and involved in the regulation of several anabolic processes. The sequence is that of Somatotropin (GH) from Crocodylus novaeguineae (Crocodile).